A 192-amino-acid chain; its full sequence is Probable GTP-binding protein EngB (192 aa).

The 171-residue stretch at 22-192 (QIPEIVFAGR…LLAHLAQYIR (171 aa)) folds into the EngB-type G domain. Residues 30-37 (GRSNVGKS), 57-61 (GKTRL), 75-78 (DLPG), 142-145 (TKDD), and 172-174 (YSS) each bind GTP. Positions 37 and 59 each coordinate Mg(2+).

The protein belongs to the TRAFAC class TrmE-Era-EngA-EngB-Septin-like GTPase superfamily. EngB GTPase family. The cofactor is Mg(2+).

Its function is as follows. Necessary for normal cell division and for the maintenance of normal septation. The chain is Probable GTP-binding protein EngB from Chlorobium phaeobacteroides (strain DSM 266 / SMG 266 / 2430).